The chain runs to 201 residues: MSRYRGPRVRISRRLGDLPGLSRKAIKRPYPPGEHGQKPRKPSEYAVRLEEKQKLRFNYGLSEKQLFKYVKAAKKLQGSTGQILLQLLEMRLDNTIFRLGMAPTIPAARQLVNHGHICINGKVVSICSYQCKPGELITVKPQESSKQLVESYLAFPGLANIPSHLELNKSNLSGKINGVIDREWVALQLNELLVVEYYSRK.

The tract at residues 13–43 (RRLGDLPGLSRKAIKRPYPPGEHGQKPRKPS) is disordered. Residues 90–154 (MRLDNTIFRL…SKQLVESYLA (65 aa)) form the S4 RNA-binding domain.

It belongs to the universal ribosomal protein uS4 family. In terms of assembly, part of the 30S ribosomal subunit. Contacts protein S5. The interaction surface between S4 and S5 is involved in control of translational fidelity.

Its subcellular location is the plastid. The protein resides in the chloroplast. In terms of biological role, one of the primary rRNA binding proteins, it binds directly to 16S rRNA where it nucleates assembly of the body of the 30S subunit. Its function is as follows. With S5 and S12 plays an important role in translational accuracy. This is Small ribosomal subunit protein uS4c (rps4) from Porphyra purpurea (Red seaweed).